Consider the following 266-residue polypeptide: Undecaprenyl-diphosphatase (266 aa).

Transmembrane regions (helical) follow at residues 1–21, 39–59, 87–107, 115–135, 144–164, 183–203, 218–238, and 246–266; these read MDTF…FLPI, QGLS…VMYF, WWII…KDFI, AVIA…DRMF, VGWK…IPGT, AAAR…AILV, ALSL…HLFL, and MTPF…FMFA.

This sequence belongs to the UppP family.

It is found in the cell inner membrane. The catalysed reaction is di-trans,octa-cis-undecaprenyl diphosphate + H2O = di-trans,octa-cis-undecaprenyl phosphate + phosphate + H(+). In terms of biological role, catalyzes the dephosphorylation of undecaprenyl diphosphate (UPP). Confers resistance to bacitracin. This Shewanella sediminis (strain HAW-EB3) protein is Undecaprenyl-diphosphatase.